The sequence spans 438 residues: Xylose isomerase (438 aa).

Asp306 and Asp308 together coordinate Mg(2+).

It belongs to the xylose isomerase family. Homotetramer. The cofactor is Mg(2+).

Its subcellular location is the cytoplasm. The catalysed reaction is alpha-D-xylose = alpha-D-xylulofuranose. This Pseudomonas fluorescens (strain SBW25) protein is Xylose isomerase.